The following is a 441-amino-acid chain: 3-phosphoshikimate 1-carboxyvinyltransferase (441 aa).

Positions 1-10 (MSVTSTASSS) are enriched in polar residues. The tract at residues 1–21 (MSVTSTASSSRELRAGGGLSG) is disordered. Residues Lys-29, Ser-30, and Arg-34 each contribute to the 3-phosphoshikimate site. Lys-29 contributes to the phosphoenolpyruvate binding site. Phosphoenolpyruvate-binding residues include Gly-103 and Arg-132. Positions 177, 179, 328, and 355 each coordinate 3-phosphoshikimate. Gln-179 contributes to the phosphoenolpyruvate binding site. Asp-328 functions as the Proton acceptor in the catalytic mechanism. The phosphoenolpyruvate site is built by Arg-359 and Arg-401.

The protein belongs to the EPSP synthase family. Monomer.

Its subcellular location is the cytoplasm. It carries out the reaction 3-phosphoshikimate + phosphoenolpyruvate = 5-O-(1-carboxyvinyl)-3-phosphoshikimate + phosphate. It functions in the pathway metabolic intermediate biosynthesis; chorismate biosynthesis; chorismate from D-erythrose 4-phosphate and phosphoenolpyruvate: step 6/7. Its function is as follows. Catalyzes the transfer of the enolpyruvyl moiety of phosphoenolpyruvate (PEP) to the 5-hydroxyl of shikimate-3-phosphate (S3P) to produce enolpyruvyl shikimate-3-phosphate and inorganic phosphate. The chain is 3-phosphoshikimate 1-carboxyvinyltransferase from Prochlorococcus marinus (strain MIT 9303).